Consider the following 1291-residue polypeptide: DNA-directed RNA polymerase subunit beta (1291 aa).

It belongs to the RNA polymerase beta chain family. As to quaternary structure, the RNAP catalytic core consists of 2 alpha, 1 beta, 1 beta' and 1 omega subunit. When a sigma factor is associated with the core the holoenzyme is formed, which can initiate transcription.

It carries out the reaction RNA(n) + a ribonucleoside 5'-triphosphate = RNA(n+1) + diphosphate. Its function is as follows. DNA-dependent RNA polymerase catalyzes the transcription of DNA into RNA using the four ribonucleoside triphosphates as substrates. The chain is DNA-directed RNA polymerase subunit beta from Cytophaga hutchinsonii (strain ATCC 33406 / DSM 1761 / CIP 103989 / NBRC 15051 / NCIMB 9469 / D465).